The chain runs to 85 residues: MAHKKAGGSSRNGRDSEGRRLGVKKFGGEIVVSGNIILRQRGTKYHPGANVGLGKDHTIFATTPGNVKFHKGFRGRMFVSVVAEA.

Positions 1–21 are disordered; that stretch reads MAHKKAGGSSRNGRDSEGRRL.

The protein belongs to the bacterial ribosomal protein bL27 family.

This Rhodospirillum rubrum (strain ATCC 11170 / ATH 1.1.1 / DSM 467 / LMG 4362 / NCIMB 8255 / S1) protein is Large ribosomal subunit protein bL27.